Consider the following 391-residue polypeptide: Putative gustatory receptor 36a (391 aa).

At 1–3 (MFD) the chain is on the cytoplasmic side. A helical membrane pass occupies residues 4–24 (WVGLLLKVLYYYGQIIGLINF). Residues 25 to 38 (EIDWQRGRVVAAQR) lie on the Extracellular side of the membrane. The helical transmembrane segment at 39–59 (GILFAIAINVLICMVLLLQIS) threads the bilayer. Over 60–73 (KKFNLDVYFGRANQ) the chain is Cytoplasmic. The chain crosses the membrane as a helical span at residues 74 to 94 (LHQYVIIVMVSLRMASGISAI). The Extracellular segment spans residues 95 to 126 (LNRWRQRAQLMRLVECVLRLFLKKPHVKQMSR). Residues 127-147 (WAILVKFSVGVVSNFLQMAIS) form a helical membrane-spanning segment. Topologically, residues 148-165 (MESLDRLGFNEFVGMASD) are cytoplasmic. Residues 166–186 (FWMSAIINMAISQHYLVILFV) traverse the membrane as a helical segment. Residues 187–247 (RAYYHLLKTE…LQSIVTQLNQ (61 aa)) are Extracellular-facing. The helical transmembrane segment at 248 to 268 (VFGIQGIMVYGGYYIFSVATT) threads the bilayer. The Cytoplasmic segment spans residues 269-290 (YITYSLAINGIEELHLSVRAAA). The chain crosses the membrane as a helical span at residues 291–311 (LVFSWFLFYYTSAILNLFVML). Residues 312–391 (KLFDDHKEME…FLIQYDMEYF (80 aa)) lie on the Extracellular side of the membrane.

The protein belongs to the insect chemoreceptor superfamily. Gustatory receptor (GR) family. Gr22e subfamily.

Its subcellular location is the cell membrane. Its function is as follows. Probable gustatory receptor which mediates acceptance or avoidance behavior, depending on its substrates. This chain is Putative gustatory receptor 36a (Gr36a), found in Drosophila melanogaster (Fruit fly).